We begin with the raw amino-acid sequence, 85 residues long: Homeobox protein knotted-1-like 5 (85 aa).

The ELK domain occupies 1–21; it reads ELKEMLLKKYSGCLSRLRSEF. Residues 22 to 85 constitute a DNA-binding region (homeobox; TALE-type); the sequence is LKKRKKGKLP…NQRKRHWKPS (64 aa).

Belongs to the TALE/KNOX homeobox family. As to expression, strongly expressed in ear inflorescence primordia and shoot meristem. Weakly expressed in embryos. Absent from leaves.

The protein resides in the nucleus. Probably binds to the DNA sequence 5'-TGAC-3'. This chain is Homeobox protein knotted-1-like 5 (KNOX5), found in Zea mays (Maize).